Consider the following 716-residue polypeptide: MAKTAKSKQSVDVADLTKAQAKVEWKRLALELETHDRLYYQEDAPKISDAAYDELRRRFNAIEKRFPELVSRDSPSQTVGAAPSGRFKKVRHAVPMLSLDNAFAEEDVRDFVGRIARFLKLAEDDRIAFSAEPKIDGLSMSLRYEGGQLVTAATRGDGAEGEDVTANIRTLKDVPQKLHGRNLPDICEIRGEVYMTKQAFLALNERQKEAGDTIFANPRNSAAGSLRQKDPTITASRPLGFFAYAWGDMSAMPAETQSGMIKWFEHCGFTTNPLTKLCHSVEELIAFHRAIEEQRAELDYDIDGVVYKVDRIDWQERLGFVSRTPRWGIAHKFPAERAMTVLKDIEIQVGRTGSFTPVGKLEPVGVGGVIVQNVTLHNEDYIKGIGNKGEVLREGRDIRIGDTVVIQRAGDVIPQVVDVLIDKRPADAEVFAFPRKCPCPLHTDVVREETAAGEEGSRARCTGEFACPYQKIEHLKLFASRRAFDIDGLGEKQIQFFFDEGWVKEPADIFTLQKRNAKLKLEEVEGYGETSVRNLFNAIEARREMALERFIYALGMRYVGETTALALARGYGSWEAFHDACLKVANGDEEAIAEMDALDQIGETVIKSVAAYFGEDHNRGIVERLTREVKILDAEKPKRNSPIATKTVVFTGTLEKMTRDEAKATAERLGAKVSGSVSKKTDYVVAGPGAGSKLKDAEKHGVKVLTEDEWLQLIGE.

NAD(+) is bound by residues 49 to 53 (DAAYD), 98 to 99 (SL), and Glu-132. The active-site N6-AMP-lysine intermediate is the Lys-134. NAD(+) is bound by residues Arg-155, Glu-192, Lys-308, and Lys-332. 4 residues coordinate Zn(2+): Cys-437, Cys-439, Cys-461, and Cys-467. A BRCT domain is found at 638 to 716 (KRNSPIATKT…EDEWLQLIGE (79 aa)).

This sequence belongs to the NAD-dependent DNA ligase family. LigA subfamily. Requires Mg(2+) as cofactor. Mn(2+) is required as a cofactor.

It carries out the reaction NAD(+) + (deoxyribonucleotide)n-3'-hydroxyl + 5'-phospho-(deoxyribonucleotide)m = (deoxyribonucleotide)n+m + AMP + beta-nicotinamide D-nucleotide.. In terms of biological role, DNA ligase that catalyzes the formation of phosphodiester linkages between 5'-phosphoryl and 3'-hydroxyl groups in double-stranded DNA using NAD as a coenzyme and as the energy source for the reaction. It is essential for DNA replication and repair of damaged DNA. The protein is DNA ligase of Bradyrhizobium sp. (strain ORS 278).